Here is an 892-residue protein sequence, read N- to C-terminus: Transposase for transposon Tn4556 (892 aa).

The segment covering 1-12 has biased composition (basic and acidic residues); sequence MGGRAGLDDGRG. The tract at residues 1 to 63 is disordered; sequence MGGRAGLDDG…GQPARDAEHR (63 aa). Residues 23 to 34 are compositionally biased toward low complexity; it reads VAEGAAGAAAWG.

This sequence belongs to the transposase 7 family.

Functionally, required for transposition of transposon Tn4556. In Streptomyces fradiae (Streptomyces roseoflavus), this protein is Transposase for transposon Tn4556 (tnpA).